Reading from the N-terminus, the 415-residue chain is Squalene synthase 11 (415 aa).

2 helical membrane passes run 281-301 (AIFRFCAIPQIMAIGTLALCF) and 392-412 (LIIILFIILAILYAYLSSNLP).

This sequence belongs to the phytoene/squalene synthase family. Mg(2+) is required as a cofactor. Requires Mn(2+) as cofactor.

Its subcellular location is the endoplasmic reticulum membrane. The catalysed reaction is 2 (2E,6E)-farnesyl diphosphate + NADH + H(+) = squalene + 2 diphosphate + NAD(+). It catalyses the reaction 2 (2E,6E)-farnesyl diphosphate + NADPH + H(+) = squalene + 2 diphosphate + NADP(+). It functions in the pathway terpene metabolism; lanosterol biosynthesis; lanosterol from farnesyl diphosphate: step 1/3. Functionally, component of the triterpene saponins (e.g. ginsenosides or panaxosides) and phytosterols biosynthetic pathways. Catalyzes the biosynthesis of squalene. This Panax ginseng (Korean ginseng) protein is Squalene synthase 11.